Here is a 571-residue protein sequence, read N- to C-terminus: Gag-Pro polyprotein (571 aa).

G2 is lipidated: N-myristoyl glycine; by host. Residues 100–103 carry the PPXY motif motif; that stretch reads PPPY. Repeats lie at residues 342-362 and 367-387; these read PPPG…DCPT. CCHC-type zinc fingers lie at residues 345 to 362 and 370 to 387; these read GPCY…DCPT and GPCP…DCPT. Residues 447-525 form the Peptidase A2 domain; it reads ALMLVDTGAE…DKWQILGRDV (79 aa). The active-site Protease; shared with dimeric partner is the D452.

As to quaternary structure, homodimer; the homodimers are part of the immature particles. Interacts with human TSG101 and NEDD4; these interactions are essential for budding and release of viral particles. Homodimer; further assembles as homohexamers. Specific enzymatic cleavages by the viral protease yield mature proteins. The polyprotein is cleaved during and after budding, this process is termed maturation. The protease is autoproteolytically processed at its N- and C-termini. Post-translationally, gag polyprotein: Myristoylated. Myristoylation of the matrix (MA) domain mediates the transport and binding of Gag polyproteins to the host plasma membrane and is required for the assembly of viral particles.

It is found in the virion. Its function is as follows. The matrix domain targets Gag, Gag-Pro and Gag-Pro-Pol polyproteins to the plasma membrane via a multipartite membrane binding signal, that includes its myristoylated N-terminus. Functionally, matrix protein. Forms the spherical core of the virus that encapsulates the genomic RNA-nucleocapsid complex. In terms of biological role, binds strongly to viral nucleic acids and promote their aggregation. Also destabilizes the nucleic acids duplexes via highly structured zinc-binding motifs. Its function is as follows. The aspartyl protease mediates proteolytic cleavages of Gag and Gag-Pol polyproteins during or shortly after the release of the virion from the plasma membrane. Cleavages take place as an ordered, step-wise cascade to yield mature proteins. This process is called maturation. Displays maximal activity during the budding process just prior to particle release from the cell. The chain is Gag-Pro polyprotein from Bos taurus (Bovine).